The following is a 224-amino-acid chain: 7-cyano-7-deazaguanine synthase (224 aa).

An ATP-binding site is contributed by 8-18; it reads LSGGMDSAAVI. The Zn(2+) site is built by Cys186, Cys196, Cys199, and Cys202.

This sequence belongs to the QueC family. Zn(2+) serves as cofactor.

It catalyses the reaction 7-carboxy-7-deazaguanine + NH4(+) + ATP = 7-cyano-7-deazaguanine + ADP + phosphate + H2O + H(+). It participates in purine metabolism; 7-cyano-7-deazaguanine biosynthesis. Catalyzes the ATP-dependent conversion of 7-carboxy-7-deazaguanine (CDG) to 7-cyano-7-deazaguanine (preQ(0)). This chain is 7-cyano-7-deazaguanine synthase, found in Xanthomonas oryzae pv. oryzae (strain MAFF 311018).